The chain runs to 869 residues: Rho GTPase-activating protein 27 (869 aa).

In terms of domain architecture, SH3 spans 6 to 69 (EGDVYVLVEH…PAQYVRELPA (64 aa)). The residue at position 28 (alanine 28) is a Phosphotyrosine. The segment at 104–134 (GADGSSAEPRGRASSLCGPARQRTGGQRNSL) is disordered. Phosphoserine occurs at positions 155, 215, and 249. Disordered regions lie at residues 208–300 (RCPP…SGES) and 331–401 (ETEE…GWSC). Basic and acidic residues predominate over residues 209–220 (CPPRAESPKQVD). The segment covering 235-250 (RATSPRSAAAPPRLSP) has biased composition (low complexity). In terms of domain architecture, WW 1 spans 246–280 (PRLSPVWETHTDTGTGRPYYYNPDTGVTTWESPFE). Residues 283 to 294 (EGTTSPATSRAS) show a composition bias toward polar residues. In terms of domain architecture, WW 2 spans 299 to 333 (ESLETEWGQYWDEESRRVFFYNPLTGETAWEDETE). Positions 345-356 (MQPSLSPRSPGQ) are enriched in polar residues. Residue serine 350 is modified to Phosphoserine. The region spanning 414 to 447 (QFTQEQWVRLEDQHGKPYFYNPEDSSVQWELPQV) is the WW 3 domain. Disordered regions lie at residues 449 to 477 (IPAP…KIKT) and 623 to 642 (EEDV…GLES). 2 positions are modified to phosphoserine: serine 459 and serine 462. The residue at position 464 (threonine 464) is a Phosphothreonine. Residue serine 469 is modified to Phosphoserine. The region spanning 477–593 (TLDKAGVLHR…WHKAIAEGIS (117 aa)) is the PH domain. Serine 632 and serine 636 each carry phosphoserine. One can recognise a Rho-GAP domain in the interval 677–866 (CALAQLCERE…LILHQCADIF (190 aa)).

In terms of assembly, interacts with SH3KBP1/CIN85. Widely expressed. Highly expressed in kidney, lung, small intestine and thymus.

The protein localises to the cytoplasm. The protein resides in the membrane. In terms of biological role, rho GTPase-activating protein which may be involved in clathrin-mediated endocytosis. GTPase activators for the Rho-type GTPases act by converting them to an inactive GDP-bound state. Has activity toward CDC42 and RAC1. The sequence is that of Rho GTPase-activating protein 27 (Arhgap27) from Mus musculus (Mouse).